A 386-amino-acid polypeptide reads, in one-letter code: Interleukin-13 receptor subunit alpha-2 (386 aa).

Residues 1–21 (MAFIHLDVGFLYTLLVCTAFG) form the signal peptide. Over 22 to 338 (SMLSNAEIKV…CWKGDIWKET (317 aa)) the chain is Extracellular. Fibronectin type-III domains follow at residues 33-133 (PPQD…SPQG), 138-234 (KIQD…LQNI), and 239-338 (PPDY…WKET). A disulfide bridge connects residues C64 and C112. A glycan (N-linked (GlcNAc...) asparagine) is linked at N114. Intrachain disulfides connect C144–C154 and C183–C196. 2 N-linked (GlcNAc...) asparagine glycosylation sites follow: N214 and N298. Residues C268 and C315 are joined by a disulfide bond. A WSXWS motif motif is present at residues 321–325 (WSEWS). The chain crosses the membrane as a helical span at residues 339 to 359 (LVFFLIPFAFVSIFVLVITCL). Residues 360 to 386 (LLYKQRALLKTIFHTKKEVFSHQDTFC) are Cytoplasmic-facing.

It belongs to the type I cytokine receptor family. Type 5 subfamily. In terms of assembly, interacts with IL4RA. Interacts with high affinity to interleukin-13 (IL13), but not to interleukin-4 (IL4). Cleaved by MMP8 leading to a soluble form that is also able to interact with IL13. In terms of tissue distribution, expressed in kidney, placenta, liver, skeletal muscle and thymus. Expression was not seen in whole blood and heart.

The protein resides in the cell membrane. Functionally, cell surface receptor that plays a role in the regulation of IL-13-mediated responses. Functions as a decoy receptor that inhibits IL-13- and IL-4-mediated signal transduction via the JAK-STAT pathway and thereby modulates immune responses and inflammation. Serves as a functional signaling receptor for IL-13 in an alternative pathway involving AP-1 ultimately leading to the production of TGFB1. The protein is Interleukin-13 receptor subunit alpha-2 (IL13RA2) of Canis lupus familiaris (Dog).